The chain runs to 288 residues: Probable aquaporin PIP2-2 (288 aa).

The segment at 1 to 21 is disordered; that stretch reads MAKDIEASAPEGGEFSAKDYT. Helical transmembrane passes span 42–62 and 81–101; these read AVIA…ATVI and GVGI…LVYC. The NPA 1 motif lies at 111-113; it reads NPA. 3 helical membrane passes run 130–150, 172–192, and 204–224; these read VLYI…VKGF, GTGL…VFSA, and IPVL…LATI. The NPA 2 signature appears at 232 to 234; the sequence is NPA. The chain crosses the membrane as a helical span at residues 254–274; sequence IFWVGPLIGAAIAAAYHQYVL.

This sequence belongs to the MIP/aquaporin (TC 1.A.8) family. PIP (TC 1.A.8.11) subfamily. In terms of tissue distribution, expressed in roots, leaves and anthers.

It localises to the cell membrane. Functionally, aquaporins facilitate the transport of water and small neutral solutes across cell membranes. This chain is Probable aquaporin PIP2-2 (PIP2-2), found in Oryza sativa subsp. japonica (Rice).